A 519-amino-acid chain; its full sequence is Cytochrome P450 CYP99A1 (519 aa).

Residue Cys453 participates in heme binding.

It belongs to the cytochrome P450 family. Heme serves as cofactor.

The protein localises to the membrane. The polypeptide is Cytochrome P450 CYP99A1 (CYP99A1) (Sorghum bicolor (Sorghum)).